A 166-amino-acid polypeptide reads, in one-letter code: NAD(P)H-quinone oxidoreductase subunit I, chloroplastic (166 aa).

4Fe-4S ferredoxin-type domains lie at 55 to 84 (GRIHFEFDKCIACEVCVRVCPIDLPVVDWK) and 95 to 124 (LNYSIDFGICIFCGNCVEYCPTNCLSMTEE). The [4Fe-4S] cluster site is built by Cys-64, Cys-67, Cys-70, Cys-74, Cys-104, Cys-107, Cys-110, and Cys-114.

The protein belongs to the complex I 23 kDa subunit family. NDH is composed of at least 16 different subunits, 5 of which are encoded in the nucleus. It depends on [4Fe-4S] cluster as a cofactor.

Its subcellular location is the plastid. The protein resides in the chloroplast thylakoid membrane. It carries out the reaction a plastoquinone + NADH + (n+1) H(+)(in) = a plastoquinol + NAD(+) + n H(+)(out). The enzyme catalyses a plastoquinone + NADPH + (n+1) H(+)(in) = a plastoquinol + NADP(+) + n H(+)(out). NDH shuttles electrons from NAD(P)H:plastoquinone, via FMN and iron-sulfur (Fe-S) centers, to quinones in the photosynthetic chain and possibly in a chloroplast respiratory chain. The immediate electron acceptor for the enzyme in this species is believed to be plastoquinone. Couples the redox reaction to proton translocation, and thus conserves the redox energy in a proton gradient. The protein is NAD(P)H-quinone oxidoreductase subunit I, chloroplastic of Melampodium leucanthum (Black foot daisy).